A 241-amino-acid chain; its full sequence is UPF0280 protein MK0206 (241 aa).

This sequence belongs to the UPF0280 family.

In Methanopyrus kandleri (strain AV19 / DSM 6324 / JCM 9639 / NBRC 100938), this protein is UPF0280 protein MK0206.